We begin with the raw amino-acid sequence, 278 residues long: NAD kinase (278 aa).

Asp67 acts as the Proton acceptor in catalysis. Residues 67–68 (DG), Arg72, 137–138 (NE), Lys148, Arg165, Asp167, 178–183 (TGYAMS), Ala202, and Gln237 contribute to the NAD(+) site.

This sequence belongs to the NAD kinase family. The cofactor is a divalent metal cation.

The protein resides in the cytoplasm. It carries out the reaction NAD(+) + ATP = ADP + NADP(+) + H(+). In terms of biological role, involved in the regulation of the intracellular balance of NAD and NADP, and is a key enzyme in the biosynthesis of NADP. Catalyzes specifically the phosphorylation on 2'-hydroxyl of the adenosine moiety of NAD to yield NADP. The chain is NAD kinase from Thermococcus kodakarensis (strain ATCC BAA-918 / JCM 12380 / KOD1) (Pyrococcus kodakaraensis (strain KOD1)).